A 364-amino-acid chain; its full sequence is Cobalt-precorrin-5B C(1)-methyltransferase (364 aa).

Belongs to the CbiD family.

It carries out the reaction Co-precorrin-5B + S-adenosyl-L-methionine = Co-precorrin-6A + S-adenosyl-L-homocysteine. Its pathway is cofactor biosynthesis; adenosylcobalamin biosynthesis; cob(II)yrinate a,c-diamide from sirohydrochlorin (anaerobic route): step 6/10. Its function is as follows. Catalyzes the methylation of C-1 in cobalt-precorrin-5B to form cobalt-precorrin-6A. In Pseudomonas putida (strain ATCC 700007 / DSM 6899 / JCM 31910 / BCRC 17059 / LMG 24140 / F1), this protein is Cobalt-precorrin-5B C(1)-methyltransferase.